A 287-amino-acid polypeptide reads, in one-letter code: Putative B3 domain-containing protein Os08g0157700 (287 aa).

The segment covering 17 to 29 (ATEEEEEEEEEEQ) has biased composition (acidic residues). The segment at 17–36 (ATEEEEEEEEEEQALGQEPA) is disordered. A DNA-binding region (TF-B3) is located at residues 71 to 168 (FDKVVTPSDV…RYFIDYRHCH (98 aa)).

Its subcellular location is the nucleus. The protein is Putative B3 domain-containing protein Os08g0157700 of Oryza sativa subsp. japonica (Rice).